The following is a 268-amino-acid chain: Zygote formation protein zyg1 (268 aa).

Plays an essential role in zygote formation by inducing sexual cell fusion. Overexpressing cells eventually formed many loose mounds, in which giant multinucleate cells were surrounded by normal-sized cells. The protein is Zygote formation protein zyg1 (zyg1) of Dictyostelium mucoroides (Slime mold).